Consider the following 122-residue polypeptide: Small ribosomal subunit protein uS13 (122 aa).

Residues 99–122 (RGQRTHTNARTRKGPAKAIAGKKK) form a disordered region.

It belongs to the universal ribosomal protein uS13 family. Part of the 30S ribosomal subunit. Forms a loose heterodimer with protein S19. Forms two bridges to the 50S subunit in the 70S ribosome.

Its function is as follows. Located at the top of the head of the 30S subunit, it contacts several helices of the 16S rRNA. In the 70S ribosome it contacts the 23S rRNA (bridge B1a) and protein L5 of the 50S subunit (bridge B1b), connecting the 2 subunits; these bridges are implicated in subunit movement. Contacts the tRNAs in the A and P-sites. This chain is Small ribosomal subunit protein uS13, found in Bradyrhizobium diazoefficiens (strain JCM 10833 / BCRC 13528 / IAM 13628 / NBRC 14792 / USDA 110).